A 238-amino-acid polypeptide reads, in one-letter code: Epoxyqueuosine reductase QueH (238 aa).

Positions 43, 44, 129, and 132 each coordinate [4Fe-4S] cluster. C211 and C213 are disulfide-bonded.

This sequence belongs to the QueH family.

The catalysed reaction is epoxyqueuosine(34) in tRNA + AH2 = queuosine(34) in tRNA + A + H2O. It participates in tRNA modification; tRNA-queuosine biosynthesis. Catalyzes the conversion of epoxyqueuosine (oQ) to queuosine (Q), which is a hypermodified base found in the wobble positions of tRNA(Asp), tRNA(Asn), tRNA(His) and tRNA(Tyr). The chain is Epoxyqueuosine reductase QueH from Staphylococcus epidermidis (strain ATCC 12228 / FDA PCI 1200).